The sequence spans 411 residues: LL-diaminopimelate aminotransferase (411 aa).

Substrate is bound by residues Tyr-15 and Gly-42. Pyridoxal 5'-phosphate is bound by residues Tyr-72, 108 to 109 (AK), Tyr-132, Asn-188, Tyr-219, and 247 to 249 (SFS). Residues Lys-109, Tyr-132, and Asn-188 each contribute to the substrate site. Residue Lys-250 is modified to N6-(pyridoxal phosphate)lysine. Residues Arg-258 and Asn-293 each coordinate pyridoxal 5'-phosphate. Substrate is bound by residues Asn-293 and Arg-389.

Belongs to the class-I pyridoxal-phosphate-dependent aminotransferase family. LL-diaminopimelate aminotransferase subfamily. Homodimer. Pyridoxal 5'-phosphate serves as cofactor.

The catalysed reaction is (2S,6S)-2,6-diaminopimelate + 2-oxoglutarate = (S)-2,3,4,5-tetrahydrodipicolinate + L-glutamate + H2O + H(+). It functions in the pathway amino-acid biosynthesis; L-lysine biosynthesis via DAP pathway; LL-2,6-diaminopimelate from (S)-tetrahydrodipicolinate (aminotransferase route): step 1/1. Involved in the synthesis of meso-diaminopimelate (m-DAP or DL-DAP), required for both lysine and peptidoglycan biosynthesis. Catalyzes the direct conversion of tetrahydrodipicolinate to LL-diaminopimelate. The protein is LL-diaminopimelate aminotransferase of Desulfitobacterium hafniense (strain Y51).